The primary structure comprises 120 residues: Seripauperin-8 (120 aa).

The first 20 residues, methionine 1–alanine 20, serve as a signal peptide directing secretion.

This sequence belongs to the SRP1/TIP1 family. Seripauperin subfamily.

This is Seripauperin-8 (PAU8) from Saccharomyces cerevisiae (strain ATCC 204508 / S288c) (Baker's yeast).